Here is a 730-residue protein sequence, read N- to C-terminus: Ribosomal RNA large subunit methyltransferase K/L (730 aa).

Residues 46–157 (TAYRLCVWSR…RGEAILSLDL (112 aa)) form the THUMP domain. A disordered region spans residues 394-418 (GERREAQPEGTEARQQVPQASEPAR).

It belongs to the methyltransferase superfamily. RlmKL family.

Its subcellular location is the cytoplasm. The catalysed reaction is guanosine(2445) in 23S rRNA + S-adenosyl-L-methionine = N(2)-methylguanosine(2445) in 23S rRNA + S-adenosyl-L-homocysteine + H(+). The enzyme catalyses guanosine(2069) in 23S rRNA + S-adenosyl-L-methionine = N(2)-methylguanosine(2069) in 23S rRNA + S-adenosyl-L-homocysteine + H(+). Specifically methylates the guanine in position 2445 (m2G2445) and the guanine in position 2069 (m7G2069) of 23S rRNA. The sequence is that of Ribosomal RNA large subunit methyltransferase K/L from Pseudomonas putida (strain ATCC 700007 / DSM 6899 / JCM 31910 / BCRC 17059 / LMG 24140 / F1).